The chain runs to 688 residues: Transcription factor GTE9 (688 aa).

The interval 1-36 (MTERNGGFPGDYCFEAPGGDYDEGSDSPRVSEGSNC) is disordered. The region spanning 132–238 (TAVMLLMKQC…KFFEVRWKTL (107 aa)) is the Bromo domain. The 82-residue stretch at 280–361 (ENVVDPAKRV…EHLREIQNKK (82 aa)) folds into the NET domain. The tract at residues 423 to 505 (GNSLGSVSGD…AQNEKQLPPE (83 aa)) is disordered. Position 478 is a phosphoserine (Ser-478). Residues 491–500 (QDGNSAQNEK) show a composition bias toward polar residues. The interval 505 to 688 (EKSYRAAILK…EIDIEEGEID (184 aa)) is transcription activation domain. A coiled-coil region spans residues 534–613 (TRDPEKLQRE…QSVELNENAK (80 aa)). The interval 660-688 (FMKQDEDEEEADPLTSPAPEIDIEEGEID) is disordered.

In terms of assembly, interacts with BT1.

The protein resides in the nucleus. The sequence is that of Transcription factor GTE9 (GTE9) from Arabidopsis thaliana (Mouse-ear cress).